We begin with the raw amino-acid sequence, 479 residues long: Ribosomal RNA small subunit methyltransferase F (479 aa).

Residues 125-131 (AAAPGSK), E149, D176, and D194 contribute to the S-adenosyl-L-methionine site. The Nucleophile role is filled by C247.

It belongs to the class I-like SAM-binding methyltransferase superfamily. RsmB/NOP family.

The protein localises to the cytoplasm. It carries out the reaction cytidine(1407) in 16S rRNA + S-adenosyl-L-methionine = 5-methylcytidine(1407) in 16S rRNA + S-adenosyl-L-homocysteine + H(+). In terms of biological role, specifically methylates the cytosine at position 1407 (m5C1407) of 16S rRNA. This is Ribosomal RNA small subunit methyltransferase F from Salmonella paratyphi B (strain ATCC BAA-1250 / SPB7).